The sequence spans 136 residues: Protein NrdI (136 aa).

It belongs to the NrdI family.

Its function is as follows. Probably involved in ribonucleotide reductase function. This Escherichia coli (strain 55989 / EAEC) protein is Protein NrdI.